The chain runs to 364 residues: tRNA 2-selenouridine synthase (364 aa).

A Rhodanese domain is found at 14–137 (LLADTPLIDV…LRQTAIQATW (124 aa)). Cysteine 97 (S-selanylcysteine intermediate) is an active-site residue.

Belongs to the SelU family. As to quaternary structure, monomer.

The enzyme catalyses 5-methylaminomethyl-2-thiouridine(34) in tRNA + selenophosphate + (2E)-geranyl diphosphate + H2O + H(+) = 5-methylaminomethyl-2-selenouridine(34) in tRNA + (2E)-thiogeraniol + phosphate + diphosphate. It catalyses the reaction 5-methylaminomethyl-2-thiouridine(34) in tRNA + (2E)-geranyl diphosphate = 5-methylaminomethyl-S-(2E)-geranyl-thiouridine(34) in tRNA + diphosphate. It carries out the reaction 5-methylaminomethyl-S-(2E)-geranyl-thiouridine(34) in tRNA + selenophosphate + H(+) = 5-methylaminomethyl-2-(Se-phospho)selenouridine(34) in tRNA + (2E)-thiogeraniol. The catalysed reaction is 5-methylaminomethyl-2-(Se-phospho)selenouridine(34) in tRNA + H2O = 5-methylaminomethyl-2-selenouridine(34) in tRNA + phosphate. Its function is as follows. Involved in the post-transcriptional modification of the uridine at the wobble position (U34) of tRNA(Lys), tRNA(Glu) and tRNA(Gln). Catalyzes the conversion of 2-thiouridine (S2U-RNA) to 2-selenouridine (Se2U-RNA). Acts in a two-step process involving geranylation of 2-thiouridine (S2U) to S-geranyl-2-thiouridine (geS2U) and subsequent selenation of the latter derivative to 2-selenouridine (Se2U) in the tRNA chain. In Salmonella enteritidis, this protein is tRNA 2-selenouridine synthase.